A 505-amino-acid chain; its full sequence is Deoxyguanosinetriphosphate triphosphohydrolase (505 aa).

The 208-residue stretch at 66-273 (RLTHSLEVQQ…MEAADDISYC (208 aa)) folds into the HD domain.

It belongs to the dGTPase family. Type 1 subfamily. Homotetramer. Mg(2+) serves as cofactor.

The catalysed reaction is dGTP + H2O = 2'-deoxyguanosine + triphosphate + H(+). Functionally, dGTPase preferentially hydrolyzes dGTP over the other canonical NTPs. The sequence is that of Deoxyguanosinetriphosphate triphosphohydrolase from Escherichia fergusonii (strain ATCC 35469 / DSM 13698 / CCUG 18766 / IAM 14443 / JCM 21226 / LMG 7866 / NBRC 102419 / NCTC 12128 / CDC 0568-73).